Reading from the N-terminus, the 242-residue chain is Probable septum site-determining protein MinC (242 aa).

The protein belongs to the MinC family. Interacts with MinD and FtsZ.

Cell division inhibitor that blocks the formation of polar Z ring septums. Rapidly oscillates between the poles of the cell to destabilize FtsZ filaments that have formed before they mature into polar Z rings. Prevents FtsZ polymerization. This Agrobacterium fabrum (strain C58 / ATCC 33970) (Agrobacterium tumefaciens (strain C58)) protein is Probable septum site-determining protein MinC.